The primary structure comprises 957 residues: Valine--tRNA ligase (957 aa).

A 'HIGH' region motif is present at residues P45–H55. Residues K571 to S575 carry the 'KMSKS' region motif. Residue K574 participates in ATP binding. Positions V887–I946 form a coiled coil.

Belongs to the class-I aminoacyl-tRNA synthetase family. ValS type 1 subfamily. In terms of assembly, monomer.

The protein resides in the cytoplasm. It carries out the reaction tRNA(Val) + L-valine + ATP = L-valyl-tRNA(Val) + AMP + diphosphate. Catalyzes the attachment of valine to tRNA(Val). As ValRS can inadvertently accommodate and process structurally similar amino acids such as threonine, to avoid such errors, it has a 'posttransfer' editing activity that hydrolyzes mischarged Thr-tRNA(Val) in a tRNA-dependent manner. The sequence is that of Valine--tRNA ligase from Rhodopseudomonas palustris (strain ATCC BAA-98 / CGA009).